The sequence spans 123 residues: Small ribosomal subunit protein uS12 (123 aa).

Aspartate 89 carries the 3-methylthioaspartic acid modification.

The protein belongs to the universal ribosomal protein uS12 family. Part of the 30S ribosomal subunit. Contacts proteins S8 and S17. May interact with IF1 in the 30S initiation complex.

Its function is as follows. With S4 and S5 plays an important role in translational accuracy. Interacts with and stabilizes bases of the 16S rRNA that are involved in tRNA selection in the A site and with the mRNA backbone. Located at the interface of the 30S and 50S subunits, it traverses the body of the 30S subunit contacting proteins on the other side and probably holding the rRNA structure together. The combined cluster of proteins S8, S12 and S17 appears to hold together the shoulder and platform of the 30S subunit. The sequence is that of Small ribosomal subunit protein uS12 from Geobacter metallireducens (strain ATCC 53774 / DSM 7210 / GS-15).